Here is a 102-residue protein sequence, read N- to C-terminus: Small ribosomal subunit protein uS10 (102 aa).

The protein belongs to the universal ribosomal protein uS10 family. As to quaternary structure, part of the 30S ribosomal subunit.

Involved in the binding of tRNA to the ribosomes. This chain is Small ribosomal subunit protein uS10, found in Methanococcus maripaludis (strain C7 / ATCC BAA-1331).